The primary structure comprises 206 residues: Large ribosomal subunit protein uL4 (206 aa).

This sequence belongs to the universal ribosomal protein uL4 family. As to quaternary structure, part of the 50S ribosomal subunit.

Its function is as follows. One of the primary rRNA binding proteins, this protein initially binds near the 5'-end of the 23S rRNA. It is important during the early stages of 50S assembly. It makes multiple contacts with different domains of the 23S rRNA in the assembled 50S subunit and ribosome. Functionally, forms part of the polypeptide exit tunnel. This Methylorubrum extorquens (strain CM4 / NCIMB 13688) (Methylobacterium extorquens) protein is Large ribosomal subunit protein uL4.